A 432-amino-acid chain; its full sequence is Adenylosuccinate synthetase (432 aa).

Residues 13–19 (GDEGKGK) and 41–43 (GHT) contribute to the GTP site. Aspartate 14 serves as the catalytic Proton acceptor. Mg(2+) contacts are provided by aspartate 14 and glycine 41. IMP-binding positions include 14–17 (DEGK), 39–42 (NAGH), threonine 130, arginine 144, glutamine 225, threonine 240, and arginine 304. Histidine 42 acts as the Proton donor in catalysis. 300 to 306 (ATTGRRR) contributes to the substrate binding site. GTP-binding positions include arginine 306, 332-334 (KLD), and 415-417 (STG).

Belongs to the adenylosuccinate synthetase family. In terms of assembly, homodimer. Mg(2+) is required as a cofactor.

The protein localises to the cytoplasm. The catalysed reaction is IMP + L-aspartate + GTP = N(6)-(1,2-dicarboxyethyl)-AMP + GDP + phosphate + 2 H(+). The protein operates within purine metabolism; AMP biosynthesis via de novo pathway; AMP from IMP: step 1/2. Plays an important role in the de novo pathway of purine nucleotide biosynthesis. Catalyzes the first committed step in the biosynthesis of AMP from IMP. The protein is Adenylosuccinate synthetase of Klebsiella pneumoniae subsp. pneumoniae (strain ATCC 700721 / MGH 78578).